The chain runs to 375 residues: MLRYHMQGFSGYGVQYSPFFDNRLAVAAGSNFGLVGNGKLFILEIDRSGRIVEVNSFLTQDCLFDLAWNESHENQVLVAQGDGTLRLFDTTFKEFPIAIFKEHEREVFSCNWNLVNRQNFLSSSWDGSIKIWSPLRKQSLMTLTPRPLEITKMVDPLNAIILKKKSFTGISKNRNCVYQAQFSPHDQNLVLSCSGNSYASLFDIRLPSGKNQNNFLVHSGLEALTCDFNKYRPYVVATGGVDNAIRIWDIRMLNKNESATIKRTVPGQLHNSSCINEIPNAHGLAIRKVTWSPHHSNILMSASYDMTCRIWRDLSNDGAKETYKTNSTDATKGSIFNFTQHSEFVFGADWSLWGKPGYVASTAWDGNLFVWNGLG.

WD repeat units lie at residues 58-89 (LTQD…RLFD), 102-133 (EHER…KIWS), 172-203 (KNRN…SLFD), 218-249 (HSGL…RIWD), 281-312 (AHGL…RIWR), and 340-372 (QHSE…FVWN).

This sequence belongs to the WD repeat peroxin-7 family. In terms of assembly, interacts with PEX21.

It localises to the cytoplasm. The protein resides in the cytosol. It is found in the peroxisome matrix. In terms of biological role, receptor required for the peroxisomal import of proteins containing a C-terminal PTS2-type peroxisomal targeting signal, such as 3-oxoacyl-CoA thiolase. Specifically binds to cargo proteins containing a PTS2 peroxisomal targeting signal in the cytosol. Cargo protein-binding triggers interaction with PEX21 and formation of a ternary complex composed of PEX21 and PEX7 along with PTS2-containing cargo proteins, which is tranlocated into peroxisomes by passing through the PEX13-PEX14 docking complex. The protein is Peroxisomal targeting signal 2 receptor of Saccharomyces cerevisiae (strain ATCC 204508 / S288c) (Baker's yeast).